The following is a 266-amino-acid chain: 3-methyl-2-oxobutanoate hydroxymethyltransferase (266 aa).

Mg(2+) is bound by residues aspartate 45 and aspartate 84. Residues 45-46, aspartate 84, and lysine 112 contribute to the 3-methyl-2-oxobutanoate site; that span reads DS. Glutamate 114 lines the Mg(2+) pocket. Glutamate 181 serves as the catalytic Proton acceptor.

Belongs to the PanB family. Homodecamer; pentamer of dimers. The cofactor is Mg(2+).

It is found in the cytoplasm. The catalysed reaction is 3-methyl-2-oxobutanoate + (6R)-5,10-methylene-5,6,7,8-tetrahydrofolate + H2O = 2-dehydropantoate + (6S)-5,6,7,8-tetrahydrofolate. The protein operates within cofactor biosynthesis; (R)-pantothenate biosynthesis; (R)-pantoate from 3-methyl-2-oxobutanoate: step 1/2. Functionally, catalyzes the reversible reaction in which hydroxymethyl group from 5,10-methylenetetrahydrofolate is transferred onto alpha-ketoisovalerate to form ketopantoate. This Stutzerimonas stutzeri (strain A1501) (Pseudomonas stutzeri) protein is 3-methyl-2-oxobutanoate hydroxymethyltransferase.